The primary structure comprises 182 residues: Adenine phosphoribosyltransferase (182 aa).

Belongs to the purine/pyrimidine phosphoribosyltransferase family. In terms of assembly, homodimer.

The protein localises to the cytoplasm. It carries out the reaction AMP + diphosphate = 5-phospho-alpha-D-ribose 1-diphosphate + adenine. The protein operates within purine metabolism; AMP biosynthesis via salvage pathway; AMP from adenine: step 1/1. Catalyzes a salvage reaction resulting in the formation of AMP, that is energically less costly than de novo synthesis. The polypeptide is Adenine phosphoribosyltransferase (Stutzerimonas stutzeri (Pseudomonas stutzeri)).